The primary structure comprises 481 residues: MAESYDVIIIGSGPGGYVAAIRASQLGLKTAIVEREHMGGICLNWGCIPTKALLRSAEVLDHANHFKDFGLVLEGSVKPDAKAVVGRSRAVSARLNAGVGFLMKKNKIDIIWGEAKLTKPGEIVVGKSSKPVVEPQHPLPKNVKGEGTYTAKHIIIATGARPRALPGIEPDGKLIWTYFEALKPDALPKSLIVMGSGAIGIEFASFYRSMGVDVTVVEVMPTIMPVEDAEITAIARKQLEKRGLKIFTSAKVTKVEKGAGSITAHVETSDGKVQQITADRMISAVGVQGNIENLGLEALGVKTDRGCVVADGYGKTNVAGIYAIGDVAGPPMLAHKAEHEGVVCVEKIAGLPNVHPTDKGKVPGCTYCNPQVASVGLTEAKAKELGRDIRVGRFSFAANGKAIALGEDQGMVKVIFDKKTGELLGAHMVGAEVTELIQGFVVAMNLETTEEELMHTIFPHPTVSETMKEAVLDAYGRVLNA.

FAD-binding positions include 34 to 42 (EREHMGGIC) and K51. A disulfide bridge connects residues C42 and C47. Residues 195-199 (GSGAI), E218, and 284-287 (AVGV) contribute to the NAD(+) site. FAD is bound by residues D326 and A334. The Proton acceptor role is filled by H460.

It belongs to the class-I pyridine nucleotide-disulfide oxidoreductase family. Homodimer. FAD serves as cofactor.

Its subcellular location is the cytoplasm. The catalysed reaction is N(6)-[(R)-dihydrolipoyl]-L-lysyl-[protein] + NAD(+) = N(6)-[(R)-lipoyl]-L-lysyl-[protein] + NADH + H(+). Its function is as follows. Lipoamide dehydrogenase is a component of the alpha-ketoacid dehydrogenase complexes. This Rhizobium etli (strain ATCC 51251 / DSM 11541 / JCM 21823 / NBRC 15573 / CFN 42) protein is Dihydrolipoyl dehydrogenase (lpdA).